Here is a 364-residue protein sequence, read N- to C-terminus: D-alanine--D-alanine ligase A (364 aa).

Positions 145–348 (KRLLRDAGLN…YTDLITRLIE (204 aa)) constitute an ATP-grasp domain. 175–230 (ESKLGLPLFVKPANQGSSVGVSKVTSEEQYTIAVDLAFEFDHKVIVEQGIKGREIE) contacts ATP. Residues aspartate 302, glutamate 315, and asparagine 317 each coordinate Mg(2+).

The protein belongs to the D-alanine--D-alanine ligase family. Mg(2+) serves as cofactor. The cofactor is Mn(2+).

Its subcellular location is the cytoplasm. It carries out the reaction 2 D-alanine + ATP = D-alanyl-D-alanine + ADP + phosphate + H(+). It functions in the pathway cell wall biogenesis; peptidoglycan biosynthesis. Functionally, cell wall formation. In Escherichia coli O6:H1 (strain CFT073 / ATCC 700928 / UPEC), this protein is D-alanine--D-alanine ligase A.